Reading from the N-terminus, the 165-residue chain is ATP synthase subunit b (165 aa).

Residues 5-25 form a helical membrane-spanning segment; that stretch reads LVGITWEFVFQIVNTFIIFLL.

It belongs to the ATPase B chain family. As to quaternary structure, F-type ATPases have 2 components, F(1) - the catalytic core - and F(0) - the membrane proton channel. F(1) has five subunits: alpha(3), beta(3), gamma(1), delta(1), epsilon(1). F(0) has three main subunits: a(1), b(2) and c(10-14). The alpha and beta chains form an alternating ring which encloses part of the gamma chain. F(1) is attached to F(0) by a central stalk formed by the gamma and epsilon chains, while a peripheral stalk is formed by the delta and b chains.

It localises to the cell membrane. Functionally, f(1)F(0) ATP synthase produces ATP from ADP in the presence of a proton or sodium gradient. F-type ATPases consist of two structural domains, F(1) containing the extramembraneous catalytic core and F(0) containing the membrane proton channel, linked together by a central stalk and a peripheral stalk. During catalysis, ATP synthesis in the catalytic domain of F(1) is coupled via a rotary mechanism of the central stalk subunits to proton translocation. In terms of biological role, component of the F(0) channel, it forms part of the peripheral stalk, linking F(1) to F(0). The protein is ATP synthase subunit b of Clostridioides difficile (strain 630) (Peptoclostridium difficile).